The primary structure comprises 345 residues: G-protein coupled receptor str-33 (345 aa).

Topologically, residues 1–11 are extracellular; that stretch reads MTVNLRDLSRT. The helical transmembrane segment at 12 to 32 threads the bilayer; sequence IAEFAFLTALVCNSLLIYLTA. Topologically, residues 33–37 are cytoplasmic; it reads RRTKN. Residues 38–58 traverse the membrane as a helical segment; sequence ITGAYKYMIILFALLGLIFSC. The Extracellular portion of the chain corresponds to 59-92; the sequence is TEMLARPFVHNFNASFVYFSLSNDLSEFKSLVQM. N-linked (GlcNAc...) asparagine glycosylation occurs at Asn71. A helical membrane pass occupies residues 93–113; sequence LLVLYSGLYSSLISFVAVQFI. The Cytoplasmic portion of the chain corresponds to 114–133; sequence YRYMVLVNANLLESWFTGWK. The chain crosses the membrane as a helical span at residues 134–154; it reads LVFWVFYVIFFGFAWSASVYF. Topologically, residues 155–204 are extracellular; sequence CLFPDTYSYNYIRTEFKDVYNIGVDRVAIFILVAYEKHPSSEEYKLRPAS. A helical membrane pass occupies residues 205–225; that stretch reads VIMIAGTISILVIQYSIMLFC. The Cytoplasmic portion of the chain corresponds to 226 to 258; it reads GASMHRQMNEKLKNFSPDNQRLQKQFFKTLLLQ. The helical transmembrane segment at 259–279 threads the bilayer; the sequence is ISVPTVLFHMPIFPVLLGPFF. Over 280-288 the chain is Extracellular; it reads NFEISAESG. The helical transmembrane segment at 289–309 threads the bilayer; that stretch reads IIYSLFSLYPPIDGLIIMTVV. Residues 310 to 345 are Cytoplasmic-facing; the sequence is TDYRIALTELFLGSHSGAQVEVIPVEVVSILNFSLL.

This sequence belongs to the nematode receptor-like protein str family. Detected in ALM and PLM mechanosensory neurons and head neurons.

It is found in the cell membrane. In terms of biological role, regulates egg-laying and locomotion. Likely to act upstream of goa-1 to suppress 5-hydroxytryptamine (5-HT) biosynthesis in hermaphrodite-specific neurons (HSNs) through inhibition of tph-1 transcription. This is G-protein coupled receptor str-33 from Caenorhabditis elegans.